The primary structure comprises 373 residues: SWI/SNF-related matrix-associated actin-dependent regulator of chromatin subfamily B member 1-A (373 aa).

Positions 1–101 are DNA-binding; sequence MALSKTYGQK…DEKYKAVSIS (101 aa).

It belongs to the SNF5 family. Component of the multiprotein chromatin-remodeling complexes SWI/SNF. Component of neural progenitors-specific chromatin remodeling complex (npBAF complex) and the neuron-specific chromatin remodeling complex (nBAF complex). Component of the BAF (SWI/SNF) chromatin remodeling complex. Component of the SWI/SNF-B (PBAF) chromatin remodeling complex. Binds to double-stranded DNA.

It localises to the nucleus. In terms of biological role, involved in chromatin-remodeling. Core component of the BAF (SWI/SNF) complex. This ATP-dependent chromatin-remodeling complex plays important roles in cell proliferation and differentiation, in cellular antiviral activities and inhibition of tumor formation. Belongs to the neural progenitors-specific chromatin remodeling complex (npBAF complex) and the neuron-specific chromatin remodeling complex (nBAF complex) and may play a role in neural development. This chain is SWI/SNF-related matrix-associated actin-dependent regulator of chromatin subfamily B member 1-A (smarcb1a), found in Danio rerio (Zebrafish).